Reading from the N-terminus, the 875-residue chain is Phosphoenolpyruvate carboxylase (875 aa).

Residues His137 and Lys542 contribute to the active site.

The protein belongs to the PEPCase type 1 family. Mg(2+) serves as cofactor.

It carries out the reaction oxaloacetate + phosphate = phosphoenolpyruvate + hydrogencarbonate. Functionally, forms oxaloacetate, a four-carbon dicarboxylic acid source for the tricarboxylic acid cycle. This is Phosphoenolpyruvate carboxylase from Pseudomonas putida (strain ATCC 47054 / DSM 6125 / CFBP 8728 / NCIMB 11950 / KT2440).